The chain runs to 290 residues: Sodium/potassium-transporting ATPase subunit beta-2 (290 aa).

At Met-1–Phe-39 the chain is on the cytoplasmic side. Residues Ile-40–Ser-67 form a helical; Signal-anchor for type II membrane protein membrane-spanning segment. The Extracellular portion of the chain corresponds to Asp-68 to Thr-290. Asn-96 and Asn-118 each carry an N-linked (GlcNAc...) asparagine glycan. Cys-129 and Cys-150 are disulfide-bonded. A glycan (N-linked (GlcNAc...) asparagine) is linked at Asn-153. An intrachain disulfide couples Cys-160 to Cys-177. N-linked (GlcNAc...) asparagine glycans are attached at residues Asn-193, Asn-197, Asn-220, and Asn-238. The immunoglobulin-like stretch occupies residues Asn-193–Thr-290. Cys-200 and Cys-261 are disulfide-bonded.

This sequence belongs to the X(+)/potassium ATPases subunit beta family. In terms of assembly, the sodium/potassium-transporting ATPase is composed of a catalytic alpha subunit, an auxiliary non-catalytic beta subunit and an additional regulatory subunit. Interacts with isoform 2 of BSG.

It localises to the cell membrane. Functionally, this is the non-catalytic component of the active enzyme, which catalyzes the hydrolysis of ATP coupled with the exchange of Na(+) and K(+) ions across the plasma membrane. The exact function of the beta-2 subunit is not known. Mediates cell adhesion of neurons and astrocytes, and promotes neurite outgrowth. In Mus musculus (Mouse), this protein is Sodium/potassium-transporting ATPase subunit beta-2 (Atp1b2).